Consider the following 737-residue polypeptide: Probable beta-glucosidase L (737 aa).

A signal peptide spans 1 to 19; it reads MRSLIRSGALNAFLAASLA. An N-linked (GlcNAc...) asparagine glycan is attached at asparagine 225. Residue aspartate 253 is part of the active site. 3 N-linked (GlcNAc...) asparagine glycosylation sites follow: asparagine 340, asparagine 365, and asparagine 608.

It belongs to the glycosyl hydrolase 3 family.

The protein localises to the secreted. The catalysed reaction is Hydrolysis of terminal, non-reducing beta-D-glucosyl residues with release of beta-D-glucose.. It participates in glycan metabolism; cellulose degradation. Beta-glucosidases are one of a number of cellulolytic enzymes involved in the degradation of cellulosic biomass. Catalyzes the last step releasing glucose from the inhibitory cellobiose. The chain is Probable beta-glucosidase L (bglL) from Emericella nidulans (strain FGSC A4 / ATCC 38163 / CBS 112.46 / NRRL 194 / M139) (Aspergillus nidulans).